The primary structure comprises 175 residues: Translation initiation factor IF-3 (175 aa).

Belongs to the IF-3 family. Monomer.

Its subcellular location is the cytoplasm. Its function is as follows. IF-3 binds to the 30S ribosomal subunit and shifts the equilibrium between 70S ribosomes and their 50S and 30S subunits in favor of the free subunits, thus enhancing the availability of 30S subunits on which protein synthesis initiation begins. The chain is Translation initiation factor IF-3 from Staphylococcus epidermidis (strain ATCC 35984 / DSM 28319 / BCRC 17069 / CCUG 31568 / BM 3577 / RP62A).